The primary structure comprises 60 residues: Small ribosomal subunit protein bS21 (60 aa).

Residues 38–60 (KGVKRREKEKAARKRLQKKHRMY) form a disordered region.

This sequence belongs to the bacterial ribosomal protein bS21 family.

The chain is Small ribosomal subunit protein bS21 from Mycoplasmoides gallisepticum (strain R(low / passage 15 / clone 2)) (Mycoplasma gallisepticum).